We begin with the raw amino-acid sequence, 162 residues long: MPDKDAIFGGEHPSTIDSKGRTCIPARFREALVQAFADERFVMTKARPISLGGERYARGLSVYPLSAWNDIKRRALANEGGYTSTQLDSIKRQFLNPAVECLADKLGRVLIPPSLRSHAGLERELWFVGMDGRFDIWSRDTYDRVNDQDEQNLPADLTAIGF.

SpoVT-AbrB domains lie at 11-62 (EHPS…GLSV) and 98-141 (AVEC…SRDT).

The protein belongs to the MraZ family. As to quaternary structure, forms oligomers.

It is found in the cytoplasm. It localises to the nucleoid. The polypeptide is Transcriptional regulator MraZ (Pelobacter propionicus (strain DSM 2379 / NBRC 103807 / OttBd1)).